Here is a 512-residue protein sequence, read N- to C-terminus: Serine--tRNA ligase, cytoplasmic (512 aa).

Met-1 carries the post-translational modification N-acetylmethionine. The tract at residues 9 to 61 (RVDKGGDPALIRETQEKRFKDPGLVDQLVKADSEWRRCRFRADNLNKLKNLCS) is interaction with tRNA. Residue Ser-241 is modified to Phosphoserine. L-serine contacts are provided by Thr-271 and Arg-302. Residues 302-304 (RQE) and 318-321 (VHQF) each bind ATP. An N6-acetyllysine modification is found at Lys-323. Glu-325 provides a ligand contact to L-serine. Position 391-394 (391-394 (ELVS)) interacts with ATP. Position 427 (Asn-427) interacts with L-serine. The disordered stretch occupies residues 472–512 (KPAPIDQEPSKKQKKQHEGSKKKAKEVTLENQLQNMEVTEA). A compositionally biased stretch (basic and acidic residues) spans 479-499 (EPSKKQKKQHEGSKKKAKEVT). Residues 482–494 (KKQKKQHEGSKKK) carry the Nuclear localization signal motif. Residues 500 to 512 (LENQLQNMEVTEA) show a composition bias toward polar residues.

The protein belongs to the class-II aminoacyl-tRNA synthetase family. Type-1 seryl-tRNA synthetase subfamily. As to quaternary structure, homodimer. The tRNA molecule may bind across the dimer. Interacts with SIRT2. Interacts with METTL6; interaction is required for the tRNA N(3)-methylcytidine methyltransferase activity of METTL6.

It is found in the cytoplasm. Its subcellular location is the nucleus. The catalysed reaction is tRNA(Ser) + L-serine + ATP = L-seryl-tRNA(Ser) + AMP + diphosphate + H(+). It carries out the reaction tRNA(Sec) + L-serine + ATP = L-seryl-tRNA(Sec) + AMP + diphosphate + H(+). The protein operates within aminoacyl-tRNA biosynthesis; selenocysteinyl-tRNA(Sec) biosynthesis; L-seryl-tRNA(Sec) from L-serine and tRNA(Sec): step 1/1. Functionally, catalyzes the attachment of serine to tRNA(Ser) in a two-step reaction: serine is first activated by ATP to form Ser-AMP and then transferred to the acceptor end of tRNA(Ser). Is probably also able to aminoacylate tRNA(Sec) with serine, to form the misacylated tRNA L-seryl-tRNA(Sec), which will be further converted into selenocysteinyl-tRNA(Sec). In the nucleus, binds to the VEGFA core promoter and prevents MYC binding and transcriptional activation by MYC. Recruits SIRT2 to the VEGFA promoter, promoting deacetylation of histone H4 at 'Lys-16' (H4K16). Thereby, inhibits the production of VEGFA and sprouting angiogenesis mediated by VEGFA. This chain is Serine--tRNA ligase, cytoplasmic (Sars1), found in Rattus norvegicus (Rat).